We begin with the raw amino-acid sequence, 367 residues long: Protein RecA (367 aa).

Over residues 1–14 (MSTEVNANQSPNAE) the composition is skewed to polar residues. The interval 1–24 (MSTEVNANQSPNAESRQEAARSGE) is disordered. A compositionally biased stretch (basic and acidic residues) spans 15-24 (SRQEAARSGE). Position 84 to 91 (84 to 91 (GPESSGKT)) interacts with ATP. A disordered region spans residues 348–367 (GSEVSSNSMRPLTTANRKAA). A compositionally biased stretch (polar residues) spans 349-367 (SEVSSNSMRPLTTANRKAA).

It belongs to the RecA family.

The protein resides in the cytoplasm. In terms of biological role, can catalyze the hydrolysis of ATP in the presence of single-stranded DNA, the ATP-dependent uptake of single-stranded DNA by duplex DNA, and the ATP-dependent hybridization of homologous single-stranded DNAs. It interacts with LexA causing its activation and leading to its autocatalytic cleavage. This chain is Protein RecA, found in Prochlorococcus marinus (strain MIT 9211).